The sequence spans 321 residues: tRNA-dihydrouridine synthase B (321 aa).

Residues proline 16–alanine 18 and glutamine 70 each bind FMN. The active-site Proton donor is the cysteine 100. Residues lysine 139, asparagine 200–aspartate 202, and glycine 224–arginine 225 contribute to the FMN site.

Belongs to the Dus family. DusB subfamily. The cofactor is FMN.

It carries out the reaction a 5,6-dihydrouridine in tRNA + NAD(+) = a uridine in tRNA + NADH + H(+). The catalysed reaction is a 5,6-dihydrouridine in tRNA + NADP(+) = a uridine in tRNA + NADPH + H(+). Its function is as follows. Catalyzes the synthesis of 5,6-dihydrouridine (D), a modified base found in the D-loop of most tRNAs, via the reduction of the C5-C6 double bond in target uridines. The protein is tRNA-dihydrouridine synthase B of Shigella flexneri.